The chain runs to 190 residues: Elongation factor P-like protein (190 aa).

Belongs to the elongation factor P family.

In Edwardsiella ictaluri (strain 93-146), this protein is Elongation factor P-like protein.